The primary structure comprises 203 residues: Holliday junction branch migration complex subunit RuvA (203 aa).

A domain I region spans residues 1 to 63; sequence MIVSLRGTVE…EESQTLYGFT (63 aa). Residues 64-142 are domain II; the sequence is DDASRRMFVL…GFNDGIPAAA (79 aa). The flexible linker stretch occupies residues 143–150; sequence QPQLSIAV. Residues 150–203 form a domain III region; sequence VDQAVQEQVLEALVGLGFSEKIALPVLSRVLRDSPELSKSQALRAALSELGTKN.

Belongs to the RuvA family. In terms of assembly, homotetramer. Forms an RuvA(8)-RuvB(12)-Holliday junction (HJ) complex. HJ DNA is sandwiched between 2 RuvA tetramers; dsDNA enters through RuvA and exits via RuvB. An RuvB hexamer assembles on each DNA strand where it exits the tetramer. Each RuvB hexamer is contacted by two RuvA subunits (via domain III) on 2 adjacent RuvB subunits; this complex drives branch migration. In the full resolvosome a probable DNA-RuvA(4)-RuvB(12)-RuvC(2) complex forms which resolves the HJ.

It is found in the cytoplasm. Functionally, the RuvA-RuvB-RuvC complex processes Holliday junction (HJ) DNA during genetic recombination and DNA repair, while the RuvA-RuvB complex plays an important role in the rescue of blocked DNA replication forks via replication fork reversal (RFR). RuvA specifically binds to HJ cruciform DNA, conferring on it an open structure. The RuvB hexamer acts as an ATP-dependent pump, pulling dsDNA into and through the RuvAB complex. HJ branch migration allows RuvC to scan DNA until it finds its consensus sequence, where it cleaves and resolves the cruciform DNA. In Corynebacterium diphtheriae (strain ATCC 700971 / NCTC 13129 / Biotype gravis), this protein is Holliday junction branch migration complex subunit RuvA.